Here is a 450-residue protein sequence, read N- to C-terminus: Adenylosuccinate lyase (450 aa).

Residues 9–10, 75–77, and 101–102 each bind N(6)-(1,2-dicarboxyethyl)-AMP; these read RY, HHD, and TS. Histidine 149 (proton donor/acceptor) is an active-site residue. Glutamine 223 contacts N(6)-(1,2-dicarboxyethyl)-AMP. Serine 273 functions as the Proton donor/acceptor in the catalytic mechanism. N(6)-(1,2-dicarboxyethyl)-AMP is bound by residues serine 274, 279 to 281, and 318 to 322; these read KRN and SVERV.

The protein belongs to the lyase 1 family. Adenylosuccinate lyase subfamily. Homotetramer. Residues from neighboring subunits contribute catalytic and substrate-binding residues to each active site.

It catalyses the reaction N(6)-(1,2-dicarboxyethyl)-AMP = fumarate + AMP. The catalysed reaction is (2S)-2-[5-amino-1-(5-phospho-beta-D-ribosyl)imidazole-4-carboxamido]succinate = 5-amino-1-(5-phospho-beta-D-ribosyl)imidazole-4-carboxamide + fumarate. Its pathway is purine metabolism; AMP biosynthesis via de novo pathway; AMP from IMP: step 2/2. It participates in purine metabolism; IMP biosynthesis via de novo pathway; 5-amino-1-(5-phospho-D-ribosyl)imidazole-4-carboxamide from 5-amino-1-(5-phospho-D-ribosyl)imidazole-4-carboxylate: step 2/2. Catalyzes two reactions in de novo purine nucleotide biosynthesis. Catalyzes the breakdown of 5-aminoimidazole- (N-succinylocarboxamide) ribotide (SAICAR or 2-[5-amino-1-(5-phospho-beta-D-ribosyl)imidazole-4-carboxamido]succinate) to 5-aminoimidazole-4-carboxamide ribotide (AICAR or 5-amino-1-(5-phospho-beta-D-ribosyl)imidazole-4-carboxamide) and fumarate, and of adenylosuccinate (ADS or N(6)-(1,2-dicarboxyethyl)-AMP) to adenosine monophosphate (AMP) and fumarate. This Pyrococcus horikoshii (strain ATCC 700860 / DSM 12428 / JCM 9974 / NBRC 100139 / OT-3) protein is Adenylosuccinate lyase (purB).